Reading from the N-terminus, the 149-residue chain is Probable ubiquitin-conjugating enzyme E2 12 (149 aa).

Positions 1 to 15 are enriched in basic and acidic residues; it reads MASKRISRELRDMQR. Residues 1 to 22 form a disordered region; the sequence is MASKRISRELRDMQRHPPANCS. A UBC core domain is found at 1 to 148; sequence MASKRISREL…AQKWTQKYAM (148 aa). Cys86 acts as the Glycyl thioester intermediate in catalysis.

The protein belongs to the ubiquitin-conjugating enzyme family. In terms of tissue distribution, ubiquitously expressed at very low levels.

It catalyses the reaction S-ubiquitinyl-[E1 ubiquitin-activating enzyme]-L-cysteine + [E2 ubiquitin-conjugating enzyme]-L-cysteine = [E1 ubiquitin-activating enzyme]-L-cysteine + S-ubiquitinyl-[E2 ubiquitin-conjugating enzyme]-L-cysteine.. It functions in the pathway protein modification; protein ubiquitination. Its function is as follows. Accepts the ubiquitin from the E1 complex and catalyzes its covalent attachment to other proteins. The protein is Probable ubiquitin-conjugating enzyme E2 12 (UBC12) of Arabidopsis thaliana (Mouse-ear cress).